Reading from the N-terminus, the 543-residue chain is Cytochrome P450 1B1 (543 aa).

A heme-binding site is contributed by Cys470.

It belongs to the cytochrome P450 family. Heme is required as a cofactor.

It localises to the endoplasmic reticulum membrane. It is found in the microsome membrane. Its subcellular location is the mitochondrion. It carries out the reaction an organic molecule + reduced [NADPH--hemoprotein reductase] + O2 = an alcohol + oxidized [NADPH--hemoprotein reductase] + H2O + H(+). The enzyme catalyses 17beta-estradiol + reduced [NADPH--hemoprotein reductase] + O2 = 2-hydroxy-17beta-estradiol + oxidized [NADPH--hemoprotein reductase] + H2O + H(+). It catalyses the reaction 17beta-estradiol + reduced [NADPH--hemoprotein reductase] + O2 = 4-hydroxy-17beta-estradiol + oxidized [NADPH--hemoprotein reductase] + H2O + H(+). The catalysed reaction is estrone + reduced [NADPH--hemoprotein reductase] + O2 = 2-hydroxyestrone + oxidized [NADPH--hemoprotein reductase] + H2O + H(+). It carries out the reaction estrone + reduced [NADPH--hemoprotein reductase] + O2 = 4-hydroxyestrone + oxidized [NADPH--hemoprotein reductase] + H2O + H(+). The enzyme catalyses testosterone + reduced [NADPH--hemoprotein reductase] + O2 = 6beta,17beta-dihydroxyandrost-4-en-3-one + oxidized [NADPH--hemoprotein reductase] + H2O + H(+). It catalyses the reaction progesterone + reduced [NADPH--hemoprotein reductase] + O2 = 6beta-hydroxyprogesterone + oxidized [NADPH--hemoprotein reductase] + H2O + H(+). The catalysed reaction is progesterone + reduced [NADPH--hemoprotein reductase] + O2 = 16alpha-hydroxyprogesterone + oxidized [NADPH--hemoprotein reductase] + H2O + H(+). It carries out the reaction all-trans-retinol + reduced [NADPH--hemoprotein reductase] + O2 = all-trans-retinal + oxidized [NADPH--hemoprotein reductase] + 2 H2O + H(+). The enzyme catalyses all-trans-retinal + reduced [NADPH--hemoprotein reductase] + O2 = all-trans-retinoate + oxidized [NADPH--hemoprotein reductase] + H2O + 2 H(+). It catalyses the reaction (5Z,8Z,11Z,14Z)-eicosatetraenoate + reduced [NADPH--hemoprotein reductase] + O2 = (8R,9S)-epoxy-(5Z,11Z,14Z)-eicosatrienoate + oxidized [NADPH--hemoprotein reductase] + H2O + H(+). The catalysed reaction is (5Z,8Z,11Z,14Z)-eicosatetraenoate + reduced [NADPH--hemoprotein reductase] + O2 = (11R,12S)-epoxy-(5Z,8Z,14Z)-eicosatrienoate + oxidized [NADPH--hemoprotein reductase] + H2O + H(+). It carries out the reaction (5Z,8Z,11Z,14Z)-eicosatetraenoate + reduced [NADPH--hemoprotein reductase] + O2 = (11S,12R)-epoxy-(5Z,8Z,14Z)-eicosatrienoate + oxidized [NADPH--hemoprotein reductase] + H2O + H(+). The enzyme catalyses (5Z,8Z,11Z,14Z)-eicosatetraenoate + reduced [NADPH--hemoprotein reductase] + O2 = (14S,15R)-epoxy-(5Z,8Z,11Z)-eicosatrienoate + oxidized [NADPH--hemoprotein reductase] + H2O + H(+). It catalyses the reaction (5Z,8Z,11Z,14Z)-eicosatetraenoate + reduced [NADPH--hemoprotein reductase] + O2 = (14R,15S)-epoxy-(5Z,8Z,11Z)-eicosatrienoate + oxidized [NADPH--hemoprotein reductase] + H2O + H(+). The catalysed reaction is (5S)-hydroperoxy-(6E,8Z,11Z,14Z)-eicosatetraenoate = 5-oxo-(6E,8Z,11Z,14Z)-eicosatetraenoate + H2O. It carries out the reaction (12S)-hydroperoxy-(5Z,8Z,10E,14Z)-eicosatetraenoate = 12-oxo-(5Z,8Z,10E,14Z)-eicosatetraenoate + H2O. The enzyme catalyses (15S)-hydroperoxy-(5Z,8Z,11Z,13E)-eicosatetraenoate = 15-oxo-(5Z,8Z,11Z,13E)-eicosatetraenoate + H2O. It catalyses the reaction (13S)-hydroperoxy-(9Z,11E)-octadecadienoate = 13-oxo-(9Z,11E)-octadecadienoate + H2O. The protein operates within steroid hormone biosynthesis. Its pathway is cofactor metabolism; retinol metabolism. It functions in the pathway lipid metabolism; arachidonate metabolism. With respect to regulation, enzyme activity is increased by cytochrome b5. Enzyme activity is increased by liposomes containing anionic phospholipids, phosphatidic acid and cardiolipin. Inhibited by naringenin with an IC(50) of 5 uM. Functionally, a cytochrome P450 monooxygenase involved in the metabolism of various endogenous substrates, including fatty acids, steroid hormones and vitamins. Mechanistically, uses molecular oxygen inserting one oxygen atom into a substrate, and reducing the second into a water molecule, with two electrons provided by NADPH via cytochrome P450 reductase (NADPH--hemoprotein reductase). Exhibits catalytic activity for the formation of hydroxyestrogens from 17beta-estradiol (E2), namely 2- and 4-hydroxy E2. Metabolizes testosterone and progesterone to B or D ring hydroxylated metabolites. May act as a major enzyme for all-trans retinoic acid biosynthesis in extrahepatic tissues. Catalyzes two successive oxidative transformation of all-trans retinol to all-trans retinal and then to the active form all-trans retinoic acid. Catalyzes the epoxidation of double bonds of certain PUFA. Converts arachidonic acid toward epoxyeicosatrienoic acid (EpETrE) regioisomers, 8,9-, 11,12-, and 14,15- EpETrE, that function as lipid mediators in the vascular system. Additionally, displays dehydratase activity toward oxygenated eicosanoids including hydroperoxyeicosatetraenoates (HpETEs). This activity is independent of cytochrome P450 reductase, NADPH, and O2. Also involved in the oxidative metabolism of xenobiotics, particularly converting polycyclic aromatic hydrocarbons and heterocyclic aryl amines procarcinogens to DNA-damaging products. Plays an important role in retinal vascular development. Under ambient/hyperoxic O2 conditions, promotes angiogenesis and capillary morphogenesis of retinal endothelial cells and pericytes, likely by metabolizing the oxygenated products symptomatic of oxidative stress. Also, contributes to oxidative homeostasis and ultrastructural organization and function of trabecular meshwork tissue through modulation of POSTN expression. This is Cytochrome P450 1B1 from Rattus norvegicus (Rat).